Here is a 206-residue protein sequence, read N- to C-terminus: LexA repressor (206 aa).

A DNA-binding region (H-T-H motif) is located at residues 28–48 (RAEIATRLGFKSANAAEEHLK). Active-site for autocatalytic cleavage activity residues include Ser123 and Lys160.

The protein belongs to the peptidase S24 family. In terms of assembly, homodimer.

The enzyme catalyses Hydrolysis of Ala-|-Gly bond in repressor LexA.. Functionally, represses a number of genes involved in the response to DNA damage (SOS response), including recA and lexA. In the presence of single-stranded DNA, RecA interacts with LexA causing an autocatalytic cleavage which disrupts the DNA-binding part of LexA, leading to derepression of the SOS regulon and eventually DNA repair. This is LexA repressor from Shewanella sp. (strain MR-4).